Here is a 349-residue protein sequence, read N- to C-terminus: Alanine racemase (349 aa).

The Proton acceptor; specific for D-alanine role is filled by Lys35. Residue Lys35 is modified to N6-(pyridoxal phosphate)lysine. Arg130 is a binding site for substrate. The Proton acceptor; specific for L-alanine role is filled by Tyr244. A substrate-binding site is contributed by Met292.

The protein belongs to the alanine racemase family. Pyridoxal 5'-phosphate is required as a cofactor.

The catalysed reaction is L-alanine = D-alanine. Its pathway is amino-acid biosynthesis; D-alanine biosynthesis; D-alanine from L-alanine: step 1/1. Catalyzes the interconversion of L-alanine and D-alanine. May also act on other amino acids. This Dinoroseobacter shibae (strain DSM 16493 / NCIMB 14021 / DFL 12) protein is Alanine racemase (alr).